A 262-amino-acid polypeptide reads, in one-letter code: Hydroxyethylthiazole kinase (262 aa).

Residue M44 coordinates substrate. R118 and T166 together coordinate ATP. A substrate-binding site is contributed by G193.

It belongs to the Thz kinase family. Mg(2+) is required as a cofactor.

It carries out the reaction 5-(2-hydroxyethyl)-4-methylthiazole + ATP = 4-methyl-5-(2-phosphooxyethyl)-thiazole + ADP + H(+). Its pathway is cofactor biosynthesis; thiamine diphosphate biosynthesis; 4-methyl-5-(2-phosphoethyl)-thiazole from 5-(2-hydroxyethyl)-4-methylthiazole: step 1/1. In terms of biological role, catalyzes the phosphorylation of the hydroxyl group of 4-methyl-5-beta-hydroxyethylthiazole (THZ). The polypeptide is Hydroxyethylthiazole kinase (Chlamydia felis (strain Fe/C-56) (Chlamydophila felis)).